Reading from the N-terminus, the 366-residue chain is Nucleoporin SEH1 (366 aa).

WD repeat units follow at residues 18–57 (AHRD…NWRR), 63–104 (CHGG…TEKD), 111–152 (QWIR…RIYE), 161–209 (RWNL…VIYE), 226–267 (DMPC…TAIL), and 290–329 (GDQR…QWVK).

Belongs to the WD repeat SEC13 family. As to quaternary structure, component of the nuclear pore complex (NPC). Probably part of the GATOR complex.

The protein resides in the nucleus. It is found in the nuclear pore complex. Its subcellular location is the lysosome membrane. Functionally, probable component of the nuclear pore complex (NPC) which is involved in the trafficking of macromolecules between the cytoplasm and nucleus. Its function is as follows. As a component of the GATOR complex may function in the amino acid-sensing branch of the TORC1 signaling pathway. The protein is Nucleoporin SEH1 of Caenorhabditis briggsae.